Here is a 464-residue protein sequence, read N- to C-terminus: tRNA-2-methylthio-N(6)-dimethylallyladenosine synthase (464 aa).

Residues 19-135 (GSYWITTFGC…LENLLGKVDL (117 aa)) form the MTTase N-terminal domain. The [4Fe-4S] cluster site is built by Cys28, Cys64, Cys98, Cys170, Cys174, and Cys177. The 239-residue stretch at 156 to 394 (RESSICGWVN…DLVEKTARSR (239 aa)) folds into the Radical SAM core domain. A TRAM domain is found at 396–464 (QRYIDNIESV…PFSLTGELSL (69 aa)).

Belongs to the methylthiotransferase family. MiaB subfamily. As to quaternary structure, monomer. It depends on [4Fe-4S] cluster as a cofactor.

It localises to the cytoplasm. The enzyme catalyses N(6)-dimethylallyladenosine(37) in tRNA + (sulfur carrier)-SH + AH2 + 2 S-adenosyl-L-methionine = 2-methylsulfanyl-N(6)-dimethylallyladenosine(37) in tRNA + (sulfur carrier)-H + 5'-deoxyadenosine + L-methionine + A + S-adenosyl-L-homocysteine + 2 H(+). Catalyzes the methylthiolation of N6-(dimethylallyl)adenosine (i(6)A), leading to the formation of 2-methylthio-N6-(dimethylallyl)adenosine (ms(2)i(6)A) at position 37 in tRNAs that read codons beginning with uridine. The sequence is that of tRNA-2-methylthio-N(6)-dimethylallyladenosine synthase from Prochlorococcus marinus (strain MIT 9301).